A 525-amino-acid chain; its full sequence is Protein BSP1 (525 aa).

4 disordered regions span residues 21 to 40 (INKPPIVKKKPQHLSTTPIE), 98 to 262 (QQQH…PSKM), 285 to 325 (LSSE…VPPK), and 339 to 525 (DKTG…PTKI). A compositionally biased stretch (basic and acidic residues) spans 110 to 122 (IEPVRHIIPDRHS). The segment covering 148–162 (NRASSENVVKSTTSA) has biased composition (polar residues). 3 stretches are compositionally biased toward basic and acidic residues: residues 171 to 182 (YKDDITAKKLDV), 201 to 223 (DKNKSKPPLPEKKTFLKSLEDNK), and 230 to 242 (KDQDKGPELKPTR). Over residues 251–261 (QLKSPPQSPSK) the composition is skewed to polar residues. Residues 285-297 (LSSEENSRSSLSE) show a composition bias toward low complexity. 2 stretches are compositionally biased toward basic and acidic residues: residues 314–325 (KAEKKKPVVPPK) and 339–354 (DKTGKGGDGKQIEPEF). Polar residues predominate over residues 382 to 398 (QNLSKNTENKKSVAQSK). The span at 447–456 (EESEISDSEP) shows a compositional bias: acidic residues. The span at 510 to 525 (NKSRSRGPKRKLPTKI) shows a compositional bias: basic residues.

The protein localises to the cell membrane. The protein resides in the cytoplasm. Its subcellular location is the cytoskeleton. It is found in the actin patch. Cortical patch protein involved in endocytosis. This Candida glabrata (strain ATCC 2001 / BCRC 20586 / JCM 3761 / NBRC 0622 / NRRL Y-65 / CBS 138) (Yeast) protein is Protein BSP1 (BSP1).